The primary structure comprises 922 residues: Lacticin 481/lactococcin biosynthesis protein LcnDR2 (922 aa).

Could be implicated in the processing or the export process of the lantibiotic lacticin 481/lactococcin DR. This is Lacticin 481/lactococcin biosynthesis protein LcnDR2 (lcnDR2) from Lactococcus lactis subsp. lactis (Streptococcus lactis).